A 327-amino-acid polypeptide reads, in one-letter code: GMP reductase (327 aa).

The Thioimidate intermediate role is filled by Cys-176. 205 to 228 contributes to the NADP(+) binding site; the sequence is IIADGGIRTHGDIAKSIRFGASMV.

It belongs to the IMPDH/GMPR family. GuaC type 2 subfamily.

The enzyme catalyses IMP + NH4(+) + NADP(+) = GMP + NADPH + 2 H(+). In terms of biological role, catalyzes the irreversible NADPH-dependent deamination of GMP to IMP. It functions in the conversion of nucleobase, nucleoside and nucleotide derivatives of G to A nucleotides, and in maintaining the intracellular balance of A and G nucleotides. The protein is GMP reductase of Streptococcus agalactiae serotype Ia (strain ATCC 27591 / A909 / CDC SS700).